A 360-amino-acid chain; its full sequence is Phosphoserine aminotransferase (360 aa).

Residue Arg41 participates in L-glutamate binding. Pyridoxal 5'-phosphate-binding residues include Trp101, Thr152, Asp172, and Gln195. Position 196 is an N6-(pyridoxal phosphate)lysine (Lys196). Pyridoxal 5'-phosphate is bound at residue 237 to 238 (NT).

Belongs to the class-V pyridoxal-phosphate-dependent aminotransferase family. SerC subfamily. Homodimer. It depends on pyridoxal 5'-phosphate as a cofactor.

Its subcellular location is the cytoplasm. The catalysed reaction is O-phospho-L-serine + 2-oxoglutarate = 3-phosphooxypyruvate + L-glutamate. It carries out the reaction 4-(phosphooxy)-L-threonine + 2-oxoglutarate = (R)-3-hydroxy-2-oxo-4-phosphooxybutanoate + L-glutamate. It functions in the pathway amino-acid biosynthesis; L-serine biosynthesis; L-serine from 3-phospho-D-glycerate: step 2/3. Its pathway is cofactor biosynthesis; pyridoxine 5'-phosphate biosynthesis; pyridoxine 5'-phosphate from D-erythrose 4-phosphate: step 3/5. Its function is as follows. Catalyzes the reversible conversion of 3-phosphohydroxypyruvate to phosphoserine and of 3-hydroxy-2-oxo-4-phosphonooxybutanoate to phosphohydroxythreonine. The chain is Phosphoserine aminotransferase from Burkholderia ambifaria (strain ATCC BAA-244 / DSM 16087 / CCUG 44356 / LMG 19182 / AMMD) (Burkholderia cepacia (strain AMMD)).